Consider the following 259-residue polypeptide: Global transcriptional regulator CodY (259 aa).

The tract at residues 1 to 155 (MELLAKTRKL…SSTVVGMEIL (155 aa)) is GAF domain. Positions 203-222 (ASKIADRVGITRSVIVNALR) form a DNA-binding region, H-T-H motif. Serine 215 carries the phosphoserine modification.

The protein belongs to the CodY family.

It is found in the cytoplasm. In terms of biological role, DNA-binding global transcriptional regulator which is involved in the adaptive response to starvation and acts by directly or indirectly controlling the expression of numerous genes in response to nutrient availability. During rapid exponential growth, CodY is highly active and represses genes whose products allow adaptation to nutrient depletion. The sequence is that of Global transcriptional regulator CodY from Bacillus mycoides (strain KBAB4) (Bacillus weihenstephanensis).